Here is a 512-residue protein sequence, read N- to C-terminus: ATP synthase subunit alpha (512 aa).

Residue 169 to 176 (GDRQTGKT) coordinates ATP.

This sequence belongs to the ATPase alpha/beta chains family. As to quaternary structure, F-type ATPases have 2 components, CF(1) - the catalytic core - and CF(0) - the membrane proton channel. CF(1) has five subunits: alpha(3), beta(3), gamma(1), delta(1), epsilon(1). CF(0) has three main subunits: a(1), b(2) and c(9-12). The alpha and beta chains form an alternating ring which encloses part of the gamma chain. CF(1) is attached to CF(0) by a central stalk formed by the gamma and epsilon chains, while a peripheral stalk is formed by the delta and b chains.

The protein localises to the cell inner membrane. The catalysed reaction is ATP + H2O + 4 H(+)(in) = ADP + phosphate + 5 H(+)(out). In terms of biological role, produces ATP from ADP in the presence of a proton gradient across the membrane. The alpha chain is a regulatory subunit. This chain is ATP synthase subunit alpha, found in Rickettsia akari (strain Hartford).